Reading from the N-terminus, the 257-residue chain is Flavin-dependent thymidylate synthase (257 aa).

A ThyX domain is found at 1–202 (MNVKLVSYTR…PRLFRYVGPN (202 aa)). Residues serine 55, 79 to 81 (RHR), and glutamine 87 contribute to the FAD site. DUMP is bound by residues 76–79 (QLVR), 87–91 (QMSHR), and arginine 141. The ThyX motif signature appears at 79–89 (RHRVASYTQMS). FAD contacts are provided by residues 157–159 (NAR) and asparagine 163. A dUMP-binding site is contributed by arginine 168. Arginine 168 serves as the catalytic Involved in ionization of N3 of dUMP, leading to its activation.

The protein belongs to the thymidylate synthase ThyX family. Homotetramer. Requires FAD as cofactor.

The enzyme catalyses dUMP + (6R)-5,10-methylene-5,6,7,8-tetrahydrofolate + NADPH + H(+) = dTMP + (6S)-5,6,7,8-tetrahydrofolate + NADP(+). It functions in the pathway pyrimidine metabolism; dTTP biosynthesis. Functionally, catalyzes the reductive methylation of 2'-deoxyuridine-5'-monophosphate (dUMP) to 2'-deoxythymidine-5'-monophosphate (dTMP) while utilizing 5,10-methylenetetrahydrofolate (mTHF) as the methyl donor, and NADPH and FADH(2) as the reductant. The protein is Flavin-dependent thymidylate synthase of Sulfurisphaera tokodaii (strain DSM 16993 / JCM 10545 / NBRC 100140 / 7) (Sulfolobus tokodaii).